The chain runs to 61 residues: Fasciculin-2 (61 aa).

Cystine bridges form between Cys3–Cys22, Cys17–Cys39, Cys41–Cys52, and Cys53–Cys59.

It belongs to the three-finger toxin family. Short-chain subfamily. Acn-esterase inhibitor sub-subfamily. Expressed by the venom gland.

Its subcellular location is the secreted. Interferes with neuromuscular transmission by inhibiting the enzyme acetylcholinesterase (AChE) present at the neuromuscular junction. It selectively binds and inhibits with a 1:1 stoichiometry the mammalian and electric fish AChE at picomolar concentrations. It is highly specific for the peripheral site of AChE and blocks the entry of acetylcholine into the active site of the enzyme (through the Met-33 residue), thereby preventing its breakdown. It has been called fasciculin since after injection into mice it causes severe, generalized and long-lasting (5-7 hours) fasciculations. This Dendroaspis angusticeps (Eastern green mamba) protein is Fasciculin-2.